We begin with the raw amino-acid sequence, 520 residues long: MENIEKLIMQEKILMLELDLVRAKISLARANGSSQQGDLPLHRETPVKEEAVHSALATFTPTQVKAIPEQTAPGKESTNPLMASILPKDMNPVQTGIRLAVPGDFLRPHQGIPIPQKTDLSSTVAPLRAESGIQHPHINYYVVYNGPHAGIYDDWGCTKAATNGAPGVAHKKFATITEARAAADAYTTSQQTDRLNFIPKGEAQLKPKSFAKALTSPPKQKAHWLTLGTKRPSGDPAPKEISFAPEITMDDFLYLYDLGRKFDGEGDDTMFTTDNEKISLFNFRKNADPQMVREAYAAGLIKTIYPSNNLQEIKYLPKKVKDAVKRFRTNCIKNTEKDIFLKIRSTIPVWTIQGLLHKPRQVIEIGVSKKVVPTESKAMESKIQIEDLTELAVKTGEQSIQSLLRLNDKKKIFVNMVEHDTLVYSKNIKDTVSEDQRAMETFQQRVISGNLLGFHCPAICHFIERTVEKEGGSYKCHHCDKGKAIVQNASADSGPKDGPPPTRSIVEKEDVPTTSSKQVD.

Residues 487–520 (QNASADSGPKDGPPPTRSIVEKEDVPTTSSKQVD) are disordered.

This sequence belongs to the caulimoviridae viroplasmin family.

It is found in the host cytoplasm. Its function is as follows. Enhances the ribosomal termination-reinitiation event leading to the translation of major open reading frames on the polycistronic viral RNAs. This is Transactivator/viroplasmin protein from Arabidopsis thaliana (Mouse-ear cress).